The primary structure comprises 701 residues: Aryl hydrocarbon receptor repressor (701 aa).

Residues 25 to 78 (TMGAEKSNPSKRHRDRLNTELDHLASLLPFSPDIISKLDKLSVLRLSVSYLRVK) form the bHLH domain. Residues 106–176 (PVQEGRLLLE…RQLHWAMDPP (71 aa)) form the PAS domain. Residues 409–430 (TEQRSQESTTKLTRQPSKNEPS) are compositionally biased toward polar residues. The tract at residues 409–432 (TEQRSQESTTKLTRQPSKNEPSTC) is disordered. Residues 555-701 (ASTTSCLWLG…SKGSDGIFLP (147 aa)) form a needed for transcriptional repression region. Residues lysine 583 and lysine 660 each participate in a glycyl lysine isopeptide (Lys-Gly) (interchain with G-Cter in SUMO2) cross-link.

Interacts with ARNT, ANKRA2, HDAC4 and HDAC5. Interacts with ARNT; forms a heterodimer with ARNT.

It localises to the cytoplasm. Its subcellular location is the nucleus. In terms of biological role, mediates dioxin toxicity and is involved in regulation of cell growth and differentiation. Represses the transcription activity of AHR by competing with this transcription factor for heterodimer formation with the ARNT and subsequently binding to the xenobiotic response element (XRE) sequence present in the promoter regulatory region of variety of genes. Represses CYP1A1 by binding the XRE sequence and recruiting ANKRA2, HDAC4 and/or HDAC5. Autoregulates its expression by associating with its own XRE site. This chain is Aryl hydrocarbon receptor repressor (Ahrr), found in Mus musculus (Mouse).